A 391-amino-acid chain; its full sequence is UPF0229 protein CLL_A3091 (391 aa).

Disordered regions lie at residues 1–23 (MAIFRDRTDKQVDHDRAIEDKRR) and 75–107 (VATGTGEEKRGDKIESGSKKAMGKGNKGAGNEE). Basic and acidic residues predominate over residues 80-92 (GEEKRGDKIESGS).

Belongs to the UPF0229 family.

In Clostridium botulinum (strain Eklund 17B / Type B), this protein is UPF0229 protein CLL_A3091.